Reading from the N-terminus, the 208-residue chain is V-type proton ATPase subunit E (208 aa).

This sequence belongs to the V-ATPase E subunit family.

Produces ATP from ADP in the presence of a proton gradient across the membrane. The protein is V-type proton ATPase subunit E of Chlamydia trachomatis serovar L2 (strain ATCC VR-902B / DSM 19102 / 434/Bu).